Here is a 249-residue protein sequence, read N- to C-terminus: Tetrahydromethanopterin S-methyltransferase subunit A (249 aa).

The Cytoplasmic segment spans residues 2–225; the sequence is PEKAEPAEGW…YMAGYLSGRT (224 aa). His-88 serves as a coordination point for 5-hydroxybenzimidazolylcob(I)amide. Residues 226 to 246 traverse the membrane as a helical segment; it reads MGLLIGIISGMIFLFLPMVVL. At 247 to 249 the chain is on the extracellular side; that stretch reads GGV.

This sequence belongs to the MtrA family. As to quaternary structure, the complex is composed of 8 subunits; MtrA, MtrB, MtrC, MtrD, MtrE, MtrF, MtrG and MtrH. The cofactor is 5-hydroxybenzimidazolylcob(I)amide.

It is found in the cell membrane. The enzyme catalyses 5-methyl-5,6,7,8-tetrahydromethanopterin + coenzyme M + 2 Na(+)(in) = 5,6,7,8-tetrahydromethanopterin + methyl-coenzyme M + 2 Na(+)(out). It functions in the pathway one-carbon metabolism; methanogenesis from CO(2); methyl-coenzyme M from 5,10-methylene-5,6,7,8-tetrahydromethanopterin: step 2/2. Functionally, part of a complex that catalyzes the formation of methyl-coenzyme M and tetrahydromethanopterin from coenzyme M and methyl-tetrahydromethanopterin. This is an energy-conserving, sodium-ion translocating step. The protein is Tetrahydromethanopterin S-methyltransferase subunit A of Methanopyrus kandleri (strain AV19 / DSM 6324 / JCM 9639 / NBRC 100938).